The following is a 272-amino-acid chain: Soluble interferon gamma receptor OPG193 (272 aa).

The first 13 residues, 1 to 13, serve as a signal peptide directing secretion; that stretch reads MRYIIILAVLFIN. 3 N-linked (GlcNAc...) asparagine; by host glycosylation sites follow: N42, N150, and N267.

The protein belongs to the type II cytokine receptor family. Homodimer. Interacts with host IFNG.

The protein resides in the secreted. Counteracts the antiviral effects of host IFN-gamma. Acts as a soluble IFN-gamma receptor and thus inhibits the interaction between host IFN-gamma and its receptor. This chain is Soluble interferon gamma receptor OPG193 (OPG193), found in Bos taurus (Bovine).